The primary structure comprises 557 residues: Dihydroxy-acid dehydratase (557 aa).

D78 is a binding site for Mg(2+). C119 contributes to the [2Fe-2S] cluster binding site. D120 and K121 together coordinate Mg(2+). An N6-carboxylysine modification is found at K121. C191 is a binding site for [2Fe-2S] cluster. Mg(2+) is bound at residue E442. Catalysis depends on S468, which acts as the Proton acceptor.

Belongs to the IlvD/Edd family. As to quaternary structure, homodimer. The cofactor is [2Fe-2S] cluster. It depends on Mg(2+) as a cofactor.

It carries out the reaction (2R)-2,3-dihydroxy-3-methylbutanoate = 3-methyl-2-oxobutanoate + H2O. The catalysed reaction is (2R,3R)-2,3-dihydroxy-3-methylpentanoate = (S)-3-methyl-2-oxopentanoate + H2O. The protein operates within amino-acid biosynthesis; L-isoleucine biosynthesis; L-isoleucine from 2-oxobutanoate: step 3/4. Its pathway is amino-acid biosynthesis; L-valine biosynthesis; L-valine from pyruvate: step 3/4. Its function is as follows. Functions in the biosynthesis of branched-chain amino acids. Catalyzes the dehydration of (2R,3R)-2,3-dihydroxy-3-methylpentanoate (2,3-dihydroxy-3-methylvalerate) into 2-oxo-3-methylpentanoate (2-oxo-3-methylvalerate) and of (2R)-2,3-dihydroxy-3-methylbutanoate (2,3-dihydroxyisovalerate) into 2-oxo-3-methylbutanoate (2-oxoisovalerate), the penultimate precursor to L-isoleucine and L-valine, respectively. This is Dihydroxy-acid dehydratase from Lachnospira eligens (strain ATCC 27750 / DSM 3376 / VPI C15-48 / C15-B4) (Eubacterium eligens).